A 169-amino-acid polypeptide reads, in one-letter code: Thermonuclease (169 aa).

A signal peptide spans Met1–Ser26. Residues Arg65, Glu73, and Arg115 contribute to the active site.

The protein belongs to the thermonuclease family. Requires Ca(2+) as cofactor.

Its subcellular location is the secreted. The enzyme catalyses Endonucleolytic cleavage to nucleoside 3'-phosphates and 3'-phosphooligonucleotide end-products.. Its function is as follows. Enzyme that catalyzes the hydrolysis of both DNA and RNA at the 5'-position of the phosphodiester bond. This is Thermonuclease (nucH) from Staphylococcus hyicus.